The sequence spans 494 residues: Cobyrinate a,c-diamide synthase (494 aa).

One can recognise a GATase cobBQ-type domain in the interval 270–475 (KIGVALDEAF…AHLHGVAYRE (206 aa)). Cysteine 352 functions as the Nucleophile in the catalytic mechanism.

Belongs to the CobB/CbiA family. Mg(2+) is required as a cofactor.

It catalyses the reaction cob(II)yrinate + 2 L-glutamine + 2 ATP + 2 H2O = cob(II)yrinate a,c diamide + 2 L-glutamate + 2 ADP + 2 phosphate + 2 H(+). The enzyme catalyses Ni-sirohydrochlorin + 2 L-glutamine + 2 ATP + 2 H2O = Ni-sirohydrochlorin a,c-diamide + 2 L-glutamate + 2 ADP + 2 phosphate + 2 H(+). It functions in the pathway cofactor biosynthesis; adenosylcobalamin biosynthesis; cob(II)yrinate a,c-diamide from sirohydrochlorin (anaerobic route): step 10/10. In terms of biological role, catalyzes the ATP-dependent amidation of the two carboxylate groups at positions a and c of cobyrinate, using either L-glutamine or ammonia as the nitrogen source (Potential). Involved in the biosynthesis of the unique nickel-containing tetrapyrrole coenzyme F430, the prosthetic group of methyl-coenzyme M reductase (MCR), which plays a key role in methanogenesis and anaerobic methane oxidation. Catalyzes the ATP-dependent amidation of the two carboxylate groups at positions a and c of Ni-sirohydrochlorin, using L-glutamine or ammonia as the nitrogen source. Also able to use sirohydrochlorin as substrate, but only produces a monoamide species in a much slower reaction. Unable to use other metallosirohydrochlorins such as sirohaem and Co-sirohydrochlorin. This is Cobyrinate a,c-diamide synthase from Methanosarcina barkeri (strain Fusaro / DSM 804).